The following is a 182-amino-acid chain: Protein Syd (182 aa).

It belongs to the Syd family.

It localises to the cell inner membrane. In terms of biological role, interacts with the SecY protein in vivo. May bind preferentially to an uncomplexed state of SecY, thus functioning either as a chelating agent for excess SecY in the cell or as a regulatory factor that negatively controls the translocase function. The polypeptide is Protein Syd (Aliivibrio salmonicida (strain LFI1238) (Vibrio salmonicida (strain LFI1238))).